Here is a 479-residue protein sequence, read N- to C-terminus: Nuclear envelope integral membrane protein 2 (479 aa).

The first 23 residues, 1–23, serve as a signal peptide directing secretion; it reads MEKLAAFILVLTLLCAYWQSAEG. Residue N69 is glycosylated (N-linked (GlcNAc...) asparagine). 5 helical membrane passes run 172–192, 203–223, 233–253, 276–296, and 301–321; these read LFFY…FLTL, LFLV…QRVL, HWME…AVCY, IVLL…VAVL, and ILPL…SFLA. N414 carries an N-linked (GlcNAc...) asparagine glycan. Residues 414-479 are disordered; it reads NSSSSDTQSH…PLDPEDQDFF (66 aa). Positions 438–449 are enriched in low complexity; that stretch reads NSPPVLNNLPSP. Pro residues predominate over residues 450 to 470; that stretch reads TIYPPTICPYPPVTYTPQPEP.

The protein belongs to the NEMP family.

The protein localises to the nucleus inner membrane. In terms of biological role, contributes to nuclear envelope stiffness in germ cells. Involved in male and female fertility. The protein is Nuclear envelope integral membrane protein 2 of Danio rerio (Zebrafish).